A 489-amino-acid polypeptide reads, in one-letter code: 6-phosphogluconate dehydrogenase, decarboxylating 1 (489 aa).

Residues 9–14 and 32–34 each bind NADP(+); these read GLAVMG and NRT. Phosphoserine is present on Ser-50. NADP(+) is bound by residues 74–76 and Asn-102; that span reads VKA. Residues Asn-102 and 128–130 contribute to the substrate site; that span reads SGG. Catalysis depends on Lys-182, which acts as the Proton acceptor. 185-186 provides a ligand contact to substrate; the sequence is HN. Residue Glu-189 is the Proton donor of the active site. The substrate site is built by Tyr-190, Lys-259, Arg-286, Arg-446, and His-452.

It belongs to the 6-phosphogluconate dehydrogenase family. Homodimer.

The protein localises to the cytoplasm. The enzyme catalyses 6-phospho-D-gluconate + NADP(+) = D-ribulose 5-phosphate + CO2 + NADPH. The protein operates within carbohydrate degradation; pentose phosphate pathway; D-ribulose 5-phosphate from D-glucose 6-phosphate (oxidative stage): step 3/3. Functionally, catalyzes the oxidative decarboxylation of 6-phosphogluconate to ribulose 5-phosphate and CO(2), with concomitant reduction of NADP to NADPH. In Saccharomyces cerevisiae (strain ATCC 204508 / S288c) (Baker's yeast), this protein is 6-phosphogluconate dehydrogenase, decarboxylating 1 (GND1).